The primary structure comprises 495 residues: ATP-dependent RNA helicase dbp3 (495 aa).

Basic and acidic residues predominate over residues 1 to 14; it reads MAKRELQDKGSTEH. Positions 1–49 are disordered; the sequence is MAKRELQDKGSTEHRAKKKSRNEKHTKKAEDSQASAQSSETQYTDPKEP. Basic residues predominate over residues 15–27; that stretch reads RAKKKSRNEKHTK. Positions 97–105 match the Q motif motif; sequence SFTSPTAIQ. One can recognise a Helicase ATP-binding domain in the interval 109–284; sequence WPFLFSGRDV…ATFMTSPVTV (176 aa). 122–129 is an ATP binding site; that stretch reads AETGSGKT. A DEAD box motif is present at residues 231–234; that stretch reads DEAD. Positions 315-464 constitute a Helicase C-terminal domain; that stretch reads RLVQLLNKYQ…DVPEDLLKFG (150 aa).

This sequence belongs to the DEAD box helicase family. DDX5/DBP2 subfamily.

It localises to the nucleus. It is found in the nucleolus. The catalysed reaction is ATP + H2O = ADP + phosphate + H(+). In terms of biological role, ATP-dependent RNA helicase required for 60S ribosomal subunit synthesis. Involved in efficient pre-rRNA processing, predominantly at site A3, which is necessary for the normal formation of 25S and 5.8S rRNAs. This Aspergillus niger (strain ATCC MYA-4892 / CBS 513.88 / FGSC A1513) protein is ATP-dependent RNA helicase dbp3 (dbp3).